The primary structure comprises 343 residues: Holliday junction branch migration complex subunit RuvB (343 aa).

Residues 1–182 form a large ATPase domain (RuvB-L) region; sequence MRDELLNTPT…FGISNRLDYY (182 aa). ATP-binding positions include Ile-21, Arg-22, Gly-63, Lys-66, Thr-67, Thr-68, 129 to 131, Arg-172, Tyr-182, and Arg-219; that span reads EDF. Mg(2+) is bound at residue Thr-67. Residues 183–253 form a small ATPAse domain (RuvB-S) region; sequence SAELLQRIII…LARKTLAALE (71 aa). Residues 256 to 343 are head domain (RuvB-H); that stretch reads EDGLDDMDKK…DGPLFQKGSS (88 aa). The DNA site is built by Arg-311 and Arg-316.

The protein belongs to the RuvB family. In terms of assembly, homohexamer. Forms an RuvA(8)-RuvB(12)-Holliday junction (HJ) complex. HJ DNA is sandwiched between 2 RuvA tetramers; dsDNA enters through RuvA and exits via RuvB. An RuvB hexamer assembles on each DNA strand where it exits the tetramer. Each RuvB hexamer is contacted by two RuvA subunits (via domain III) on 2 adjacent RuvB subunits; this complex drives branch migration. In the full resolvosome a probable DNA-RuvA(4)-RuvB(12)-RuvC(2) complex forms which resolves the HJ.

The protein resides in the cytoplasm. It catalyses the reaction ATP + H2O = ADP + phosphate + H(+). Functionally, the RuvA-RuvB-RuvC complex processes Holliday junction (HJ) DNA during genetic recombination and DNA repair, while the RuvA-RuvB complex plays an important role in the rescue of blocked DNA replication forks via replication fork reversal (RFR). RuvA specifically binds to HJ cruciform DNA, conferring on it an open structure. The RuvB hexamer acts as an ATP-dependent pump, pulling dsDNA into and through the RuvAB complex. RuvB forms 2 homohexamers on either side of HJ DNA bound by 1 or 2 RuvA tetramers; 4 subunits per hexamer contact DNA at a time. Coordinated motions by a converter formed by DNA-disengaged RuvB subunits stimulates ATP hydrolysis and nucleotide exchange. Immobilization of the converter enables RuvB to convert the ATP-contained energy into a lever motion, pulling 2 nucleotides of DNA out of the RuvA tetramer per ATP hydrolyzed, thus driving DNA branch migration. The RuvB motors rotate together with the DNA substrate, which together with the progressing nucleotide cycle form the mechanistic basis for DNA recombination by continuous HJ branch migration. Branch migration allows RuvC to scan DNA until it finds its consensus sequence, where it cleaves and resolves cruciform DNA. The chain is Holliday junction branch migration complex subunit RuvB from Prosthecochloris aestuarii (strain DSM 271 / SK 413).